We begin with the raw amino-acid sequence, 111 residues long: V-type proton ATPase subunit G 2 (111 aa).

This sequence belongs to the V-ATPase G subunit family. V-ATPase is a heteromultimeric enzyme composed of a peripheral catalytic V1 complex (components A to H) attached to an integral membrane V0 proton pore complex (components: a, c, c', c'' and d).

Functionally, catalytic subunit of the peripheral V1 complex of vacuolar ATPase (V-ATPase). V-ATPase is responsible for acidifying a variety of intracellular compartments in eukaryotic cells. The chain is V-type proton ATPase subunit G 2 (VATG2) from Nicotiana tabacum (Common tobacco).